Reading from the N-terminus, the 1494-residue chain is MRILANKTRLPHPRRREAPGSPPLSPRGHCPPAPAKPMHPENKLTNHGKTGNGGAQSQHQNVNQGPTCNLGSKGVGAGSHGAKANQISPSNSSLKNPQAGVSPFSSLKGKVKRERSVSVDSGEQREAGTPSLDSEAKEVAPRSKRRCVLERKQPYSGDEWCSGPDSEEDDKPIAAAHNCNVADPAMVTPQLGPGQTAQLPLSESSAPGPQHGPQPGLRPDVPGGGGGGVPGKPPSQFVYVFTTHLANTAAEAVLQGRAESILAYHQQNVPRAKLDQAPKVPPTPEPLPLNTPSAGTPQSQPPPLPPPPPAPGSAPPALPPEGPPEDTSQDLAPNSVGAASTGGGTGGTHPNTPTAATANNPLPPGGDPGSAPGSALLGEATPTGNGQRNLVGSEGLSKEQLEHRERSLQTLRDIERLLLRSGETEPFLKGPPGGAGEGGPPAQAPSAAQPPPSAPPGGLKKYEEPLQSMISQTQSLGGPPLEHEVPGHPQGGDMGQQMNMMMQRLGQDSLTPEQVAWRKLQEEYYEEKRRKEEQIGLHGGRPLQDMVGMGGMMGRGPPPPYHSKPGDQWPPGMGAQLRGPMDVQDPMQLRPGPPFPGPRFPGNQMQRVPGFGGMQSMPMEVPMNAMQRPVRPGMAWNEDLPPIGGPSNFAQNAVPYPGGQGEAERFMTPRVREELLRHQLLEKRSMGMQRPLGMAGSGMGQSMEMERMIQAHRQMDPAMFPGQMTGGDGLAGTPMGIEFGGGRGLLSPPMGQSGLREVDPPMGPGNLNMNMNVNMNMNMNLNVQMTPQQQMLMSQKMRGPGDMMGPQGLSPEEMARVRAQNSSGMMGGPQKMLMPSQFPNQGQQGFSGGQGPYQAMPQDMGNTPDMFSPDQSSVPMGTVGTARLSHMPLPPASNPPGSVHLASNRGLGRRPSDLTISINQMGSPGMGHLKSPTLSQVHSPLVTSPSANLKSPQTPSQMVPLPSANPPGPLKSPQVLSSSLGVRSPTGSPSRLKSPSMAVPSPGWVASPKTAMPSPGVSQNKQPPLSINSSSTLGNVEQGALPPSAPRNSSSAPPANPSSGLMNPSLPFTSSPDPTPSQNPLSLMMSQMSKYAMPSSTPLYHNAIKTIATSDDELLPDRPLLPPPPPPQGSGPGISNNQPNQMHMNPAAAQSPMGMNLPGQQPLSHEPPPTMLPSPTPLGSNIPLHPNAQGTGGSSQNSMMMAPGGPDSLNAPCGPVPSSSQMMSFPPRLQQPHGAMAPTGAGGPGLQQHYPSGMALPPEDLPTQPPGPIPPQQHLMGKGMTGRMGDAYPPGVLPGVASVLNDPELSEVIRPTPTGIPEFDLSRIIPSEKPSSTLQYFPKSENQPPKAQPPNLHLMNLQNMMAEQTPSRPPNLPGQQGVQRGLSMSMCHPGQMSLLGRTGVPPQQGMVPHGLHQGVMSPPQGLMTQQNFMLMKQRGVGGEVYTQPPHMLSPQGSLMGPPPQQNLMVSHPLRQRSVSLDSQMGYLPTPGSMANLPF.

2 disordered regions span residues 1–236 (MRIL…PPSQ) and 269–496 (VPRA…DMGQ). Pro residues predominate over residues 20–37 (GSPPLSPRGHCPPAPAKP). A phosphoserine mark is found at Ser-21 and Ser-25. Lys-36 is subject to N6-acetyllysine. Polar residues-rich tracts occupy residues 45–70 (TNHGKTGNGGAQSQHQNVNQGPTCNL) and 85–96 (NQISPSNSSLKN). Position 88 is a phosphoserine (Ser-88). N6-acetyllysine occurs at positions 108 and 110. Basic and acidic residues-rich tracts occupy residues 114-126 (ERSVSVDSGEQRE) and 134-153 (SEAKEVAPRSKRRCVLERKQ). A phosphoserine mark is found at Ser-116 and Ser-118. Position 137 is an N6-acetyllysine (Lys-137). The span at 193–207 (PGQTAQLPLSESSAP) shows a compositional bias: polar residues. Composition is skewed to pro residues over residues 279-289 (KVPPTPEPLPL) and 299-322 (SQPPPLPPPPPAPGSAPPALPPEG). The tract at residues 302-530 (PPLPPPPPAP…QEEYYEEKRR (229 aa)) is necessary for interaction with CTNNB1. The segment covering 348–360 (THPNTPTAATANN) has biased composition (low complexity). The span at 396 to 418 (LSKEQLEHRERSLQTLRDIERLL) shows a compositional bias: basic and acidic residues. A Phosphoserine modification is found at Ser-421. The residue at position 511 (Thr-511) is a Phosphothreonine. Residue Arg-677 is modified to Asymmetric dimethylarginine. A phosphoserine mark is found at Ser-747, Ser-810, Ser-912, Ser-923, Ser-935, Ser-939, Ser-944, Ser-972, Ser-984, Ser-988, Ser-994, Ser-1001, Ser-1007, and Ser-1014. Disordered regions lie at residues 905 to 1082 (RGLG…NPLS) and 1113 to 1206 (ELLP…PGGP). Residues 932–957 (PTLSQVHSPLVTSPSANLKSPQTPSQ) show a composition bias toward polar residues. The segment covering 974–993 (QVLSSSLGVRSPTGSPSRLK) has biased composition (polar residues). The segment covering 1016-1035 (GVSQNKQPPLSINSSSTLGN) has biased composition (polar residues). Positions 1046–1059 (PRNSSSAPPANPSS) are enriched in low complexity. Over residues 1060-1082 (GLMNPSLPFTSSPDPTPSQNPLS) the composition is skewed to polar residues. The segment covering 1119 to 1129 (PLLPPPPPPQG) has biased composition (pro residues). Residues 1133–1143 (GISNNQPNQMH) are compositionally biased toward polar residues. Residues 1165 to 1176 (HEPPPTMLPSPT) show a composition bias toward pro residues. Residue Lys-1339 forms a Glycyl lysine isopeptide (Lys-Gly) (interchain with G-Cter in SUMO2) linkage.

It belongs to the BCL9 family. In terms of assembly, found in a complex with CDC73; CTNNB1 and PYGO1. Interacts with CTNNB1. In terms of tissue distribution, expressed in kidney, liver, lung, testis, brain, spleen, heart and skeletal muscle. Highly expressed in numerous colorectal tumors compared to corresponding non-cancerous tissues.

It is found in the nucleus. In terms of biological role, transcriptional regulator that acts as an activator. Promotes beta-catenin transcriptional activity. Plays a role in tumorigenesis. Enhances the neoplastic transforming activity of CTNNB1. The sequence is that of B-cell CLL/lymphoma 9-like protein (Bcl9l) from Mus musculus (Mouse).